A 344-amino-acid chain; its full sequence is Endo-1,4-beta-xylanase UM03411 (344 aa).

The N-terminal stretch at 1–21 (MKTNFLVLLSALLAASSAVTA) is a signal peptide. The GH10 domain maps to 35–338 (QRAGSSLNAA…KPAYNAVLST (304 aa)). The Proton donor role is filled by Glu166. A glycan (N-linked (GlcNAc...) asparagine) is linked at Asn171. The active-site Nucleophile is the Glu275. Cys293 and Cys299 form a disulfide bridge. Asn310 and Asn323 each carry an N-linked (GlcNAc...) asparagine glycan.

Belongs to the glycosyl hydrolase 10 (cellulase F) family.

The protein resides in the secreted. The catalysed reaction is Endohydrolysis of (1-&gt;4)-beta-D-xylosidic linkages in xylans.. Its pathway is glycan degradation; xylan degradation. Its function is as follows. Endo-1,4-beta-xylanase involved in the hydrolysis of xylan, a major structural heterogeneous polysaccharide found in plant biomass representing the second most abundant polysaccharide in the biosphere, after cellulose. In Mycosarcoma maydis (Corn smut fungus), this protein is Endo-1,4-beta-xylanase UM03411.